The chain runs to 1257 residues: uncharacterized protein (1257 aa).

Positions 1–26 (MNFSNKPNKSRKKSNRKNKKSNKSNT) are disordered. Residues 8-22 (NKSRKKSNRKNKKSN) are compositionally biased toward basic residues.

Its subcellular location is the virion. This is an uncharacterized protein from Acanthamoeba polyphaga mimivirus (APMV).